The primary structure comprises 308 residues: D-alanine--D-alanine ligase (308 aa).

The ATP-grasp domain maps to 105-302 (KAIFRSLGLA…FPDLCERILD (198 aa)). Residue 133 to 188 (DLPFGLPCVVKPAGEGSSVGVHLVNEAAELGPACRDAASHAGDVIVERYVKGTEVD) participates in ATP binding. 3 residues coordinate Mg(2+): Asp256, Glu269, and Asn271.

The protein belongs to the D-alanine--D-alanine ligase family. Mg(2+) is required as a cofactor. Mn(2+) serves as cofactor.

Its subcellular location is the cytoplasm. The catalysed reaction is 2 D-alanine + ATP = D-alanyl-D-alanine + ADP + phosphate + H(+). It functions in the pathway cell wall biogenesis; peptidoglycan biosynthesis. Cell wall formation. In Anaeromyxobacter sp. (strain K), this protein is D-alanine--D-alanine ligase.